We begin with the raw amino-acid sequence, 116 residues long: Large ribosomal subunit protein bL17 (116 aa).

It belongs to the bacterial ribosomal protein bL17 family. In terms of assembly, part of the 50S ribosomal subunit. Contacts protein L32.

The polypeptide is Large ribosomal subunit protein bL17 (Prochlorococcus marinus (strain MIT 9215)).